The chain runs to 66 residues: MSQTPTVNCPTCGAPVEFTPENKYRPFCSDRCKLIDLGAWASEEHKIPVAPDAEDELFSGDFDPRH.

Zn(2+) contacts are provided by cysteine 9, cysteine 12, cysteine 28, and cysteine 32.

It belongs to the DNA gyrase inhibitor YacG family. Interacts with GyrB. It depends on Zn(2+) as a cofactor.

In terms of biological role, inhibits all the catalytic activities of DNA gyrase by preventing its interaction with DNA. Acts by binding directly to the C-terminal domain of GyrB, which probably disrupts DNA binding by the gyrase. The chain is DNA gyrase inhibitor YacG from Pseudomonas fluorescens (strain Pf0-1).